A 978-amino-acid chain; its full sequence is Mineralocorticoid receptor (978 aa).

Positions methionine 1–isoleucine 602 are modulating. The span at serine 234–asparagine 243 shows a compositional bias: polar residues. 2 disordered regions span residues serine 234–glycine 331 and glycine 353–valine 372. Residues serine 250, serine 259, serine 283, serine 287, and serine 299 each carry the phosphoserine modification. A compositionally biased stretch (low complexity) spans serine 259 to proline 300. Polar residues predominate over residues alanine 301–glycine 331. Residues cysteine 603, cysteine 606, cysteine 620, cysteine 623, cysteine 637, cysteine 643, cysteine 653, and cysteine 656 each coordinate Zn(2+). NR C4-type zinc fingers lie at residues cysteine 603–cysteine 623 and cysteine 637–cysteine 661. Residues cysteine 603 to methionine 666 constitute a DNA-binding region (nuclear receptor). Positions asparagine 667–proline 719 are hinge. The segment at glycine 681–alanine 706 is disordered. Over residues glutamine 688 to serine 697 the composition is skewed to pro residues. One can recognise an NR LBD domain in the interval glutamine 720–isoleucine 958. Residues asparagine 764 and glutamine 770 each contribute to the 21-hydroxyprogesterone site. Aldosterone-binding residues include asparagine 764 and glutamine 770. Asparagine 764 and glutamine 770 together coordinate progesterone. Residues lysine 776–lysine 779 are important for coactivator binding. Residues arginine 811 and threonine 939 each coordinate 21-hydroxyprogesterone. Aldosterone contacts are provided by arginine 811 and threonine 939. Progesterone-binding residues include arginine 811 and threonine 939.

The protein belongs to the nuclear hormone receptor family. NR3 subfamily. Heteromultimeric cytoplasmic complex with HSP90, HSP70, and FKBP4, in the absence of ligand. After ligand binding, it translocates to the nucleus and binds to DNA as a homodimer and as a heterodimer with NR3C1. Binds the coactivator NCOA2. May interact with HSD11B2 in the absence of ligand. Binds the coactivators NCOA1, TIF1 and NRIP1. Post-translationally, phosphorylated. In terms of tissue distribution, expressed in heart and kidney.

Its subcellular location is the cytoplasm. It is found in the nucleus. The protein localises to the endoplasmic reticulum membrane. In terms of biological role, receptor for both mineralocorticoids (MC) such as aldosterone and glucocorticoids (GC) such as corticosterone or cortisol. Binds to mineralocorticoid response elements (MRE) and transactivates target genes. The effect of MC is to increase ion and water transport and thus raise extracellular fluid volume and blood pressure and lower potassium levels. The protein is Mineralocorticoid receptor (Nr3c2) of Mus musculus (Mouse).